The chain runs to 137 residues: Histone H2B (137 aa).

Basic and acidic residues predominate over residues 1–10 (MPPKAADKKP). The interval 1 to 45 (MPPKAADKKPASKAPATASKAPEKKDAGKKTAASGDKKKRTKTRK) is disordered. 2 positions are modified to N6-acetyllysine; alternate: lysine 8 and lysine 9. Glycyl lysine isopeptide (Lys-Gly) (interchain with G-Cter in SUMO); alternate cross-links involve residues lysine 8 and lysine 9. Position 12 is a phosphoserine (serine 12). At lysine 13 the chain carries N6-acetyllysine. At lysine 24 the chain carries N6-acetyllysine; alternate. Lysine 24 is covalently cross-linked (Glycyl lysine isopeptide (Lys-Gly) (interchain with G-Cter in SUMO); alternate). A Glycyl lysine isopeptide (Lys-Gly) (interchain with G-Cter in SUMO) cross-link involves residue lysine 25. A Glycyl lysine isopeptide (Lys-Gly) (interchain with G-Cter in ubiquitin) cross-link involves residue lysine 131.

It belongs to the histone H2B family. In terms of assembly, the nucleosome is a histone octamer containing two molecules each of H2A, H2B, H3 and H4 assembled in one H3-H4 heterotetramer and two H2A-H2B heterodimers. The octamer wraps approximately 147 bp of DNA. In terms of processing, monoubiquitinated by the UBC2-BRE1 complex to form H2BK123ub1. H2BK123ub1 gives a specific tag for epigenetic transcriptional activation and is also prerequisite for H3K4me and H3K79me formation. H2BK123ub1 also modulates the formation of double-strand breaks during meiosis and is a prerequisite for DNA-damage checkpoint activation. Post-translationally, phosphorylated by STE20 to form H2BS10ph during progression through meiotic prophase. May be correlated with chromosome condensation. Acetylated by GCN5 to form H2BK11ac and H2BK16ac. H2BK16ac can also be formed by ESA1. Acetylation of N-terminal lysines and particularly formation of H2BK11acK16ac has a positive effect on transcription. In terms of processing, sumoylation to form H2BK6su or H2BK7su, and probably also H2BK16su or H2BK17su, occurs preferentially near the telomeres and represses gene transcription.

The protein resides in the nucleus. The protein localises to the chromosome. Functionally, core component of nucleosome. Nucleosomes wrap and compact DNA into chromatin, limiting DNA accessibility to the cellular machineries which require DNA as a template. Histones thereby play a central role in transcription regulation, DNA repair, DNA replication and chromosomal stability. DNA accessibility is regulated via a complex set of post-translational modifications of histones, also called histone code, and nucleosome remodeling. The protein is Histone H2B (HTB1) of Pyricularia oryzae (strain Y34) (Rice blast fungus).